A 519-amino-acid chain; its full sequence is Cytosol aminopeptidase (519 aa).

Residue Ser42 is modified to Phosphoserine. Lys45 bears the N6-succinyllysine mark. Ser54 carries the post-translational modification Phosphoserine. Residues Lys61 and Lys103 each carry the N6-succinyllysine modification. Phosphoserine is present on residues Ser180 and Ser194. The Zn(2+) site is built by Leu202, Met203, and Thr205. Position 221 is an N6-acetyllysine; alternate (Lys221). Position 221 is an N6-succinyllysine; alternate (Lys221). Ser238 is subject to Phosphoserine. The Zn(2+) site is built by Lys282 and Asp287. Residues Lys282, Asp287, Ser292, and Lys294 each coordinate substrate. Asp287 lines the Mg(2+) pocket. Lys294 is a catalytic residue. Arg303, Asp305, Asp364, and Glu366 together coordinate Zn(2+). Residues Asp305 and Asp364 each contribute to the substrate site. Positions 364 and 366 each coordinate Mg(2+). The active site involves Arg368. N6-acetyllysine; alternate is present on Lys455. N6-succinyllysine; alternate is present on Lys455. Lys476 carries the post-translational modification N6-succinyllysine. Lys489 bears the N6-acetyllysine; alternate mark. Position 489 is an N6-succinyllysine; alternate (Lys489).

This sequence belongs to the peptidase M17 family. As to quaternary structure, homohexamer. Requires Zn(2+) as cofactor. Mn(2+) serves as cofactor.

It is found in the cytoplasm. It catalyses the reaction Release of an N-terminal amino acid, Xaa-|-Yaa-, in which Xaa is preferably Leu, but may be other amino acids including Pro although not Arg or Lys, and Yaa may be Pro. Amino acid amides and methyl esters are also readily hydrolyzed, but rates on arylamides are exceedingly low.. It carries out the reaction an S-substituted L-cysteinylglycine + H2O = an S-substituted L-cysteine + glycine. The enzyme catalyses L-cysteinylglycine + H2O = L-cysteine + glycine. The catalysed reaction is S-benzyl-L-cysteinylglycine + H2O = S-benzyl-L-cysteine + glycine. It catalyses the reaction Release of N-terminal proline from a peptide.. Functionally, cytosolic metallopeptidase that catalyzes the removal of unsubstituted N-terminal hydrophobic amino acids from various peptides. The presence of Zn(2+) ions is essential for the peptidase activity, and the association with other cofactors can modulate the substrate spectificity of the enzyme. For instance, in the presence of Mn(2+), it displays a specific Cys-Gly hydrolyzing activity of Cys-Gly-S-conjugates. Involved in the metabolism of glutathione and in the degradation of glutathione S-conjugates, which may play a role in the control of the cell redox status. This chain is Cytosol aminopeptidase, found in Homo sapiens (Human).